We begin with the raw amino-acid sequence, 163 residues long: uncharacterized protein (163 aa).

4 4Fe-4S ferredoxin-type domains span residues 30–59 (REII…YSSD), 61–90 (LYIT…IIRL), 105–136 (KYEF…EYGS), and 136–163 (SKIR…IILR). Residues C39, C42, C45, C49, C70, C73, C76, C80, C116, C119, C122, C126, C145, C148, C151, and C155 each coordinate [4Fe-4S] cluster.

This is an uncharacterized protein from Methanocaldococcus jannaschii (strain ATCC 43067 / DSM 2661 / JAL-1 / JCM 10045 / NBRC 100440) (Methanococcus jannaschii).